Reading from the N-terminus, the 276-residue chain is ARL14 effector protein (276 aa).

Residues 159-183 (QTEFAPESGKREKRKLTKNASASSD) are disordered. Lys-176 participates in a covalent cross-link: Glycyl lysine isopeptide (Lys-Gly) (interchain with G-Cter in SUMO2). Residues Ser-182 and Ser-266 each carry the phosphoserine modification.

Interacts with ARL14 and MYO1E.

It localises to the cytoplasm. Its function is as follows. Through its interaction with ARL14 and MYO1E, may connect MHC class II-containing cytoplasmic vesicles to the actin network and hence controls the movement of these vesicles along the actin cytoskeleton in dendritic cells. The protein is ARL14 effector protein (Arl14ep) of Rattus norvegicus (Rat).